The chain runs to 258 residues: Global transcriptional regulator CodY (258 aa).

Residues 1-156 (MSILLNKTRK…SATIVGLEIL (156 aa)) are GAF domain. A DNA-binding region (H-T-H motif) is located at residues 204–223 (ASKIADKVGITRSVIVNALR).

The protein belongs to the CodY family.

It is found in the cytoplasm. Its function is as follows. DNA-binding global transcriptional regulator which is involved in the adaptive response to starvation and acts by directly or indirectly controlling the expression of numerous genes in response to nutrient availability. During rapid exponential growth, CodY is highly active and represses genes whose products allow adaptation to nutrient depletion. This Clostridium acetobutylicum (strain ATCC 824 / DSM 792 / JCM 1419 / IAM 19013 / LMG 5710 / NBRC 13948 / NRRL B-527 / VKM B-1787 / 2291 / W) protein is Global transcriptional regulator CodY.